A 1333-amino-acid polypeptide reads, in one-letter code: ABC transporter ATP-binding protein/permease PDR18 (1333 aa).

Residues 13–33 (FLEGQTFGDILCLPWTIIKGI) traverse the membrane as a helical segment. In terms of domain architecture, ABC transporter 1 spans 30-281 (IKGIRERKNR…FENMGYLCPP (252 aa)). N48, N144, N205, and N350 each carry an N-linked (GlcNAc...) asparagine glycan. A run of 6 helical transmembrane segments spans residues 392–412 (YTVINTCAAIAQAFITGSLFY), 425–445 (SGVLFFSLLYYSLMGLANISF), 474–494 (FPFRMIGLTFFIIILYFLAGL), 499–519 (GAFFTMYLLLTMCSEAITSLF), 534–554 (SIAGVVMLSIAMYSTYMIQLP), and 642–662 (FGIMWCFLIGYIVLRAVFTEY). N-linked (GlcNAc...) asparagine glycosylation is found at N697 and N733. One can recognise an ABC transporter 2 domain in the interval 729–971 (FIWKNVSFTI…VIKYFEKNGA (243 aa)). 765-772 (GESGAGKT) is a binding site for ATP. N-linked (GlcNAc...) asparagine glycosylation is present at N958. 6 consecutive transmembrane segments (helical) span residues 1071–1091 (LLMISGLFIGFTFFHVGVNAI), 1092–1112 (GLQNSLFACFMAIVISAPATN), 1150–1170 (PYHLLFSTIFFVSSYFPLGVF), 1178–1198 (VFYLNYAILFQLYYIGLALMI), 1210–1230 (VIVGFILSFLLSFCGAVQPAS), and 1235–1255 (FWTFMWKLSPYTYFLQNLVGL). N1320 carries an N-linked (GlcNAc...) asparagine glycan.

It belongs to the ABC transporter superfamily. ABCG family. PDR (TC 3.A.1.205) subfamily.

The protein resides in the membrane. This chain is ABC transporter ATP-binding protein/permease PDR18 (PDR18), found in Saccharomyces cerevisiae (strain ATCC 204508 / S288c) (Baker's yeast).